Reading from the N-terminus, the 151-residue chain is SsrA-binding protein (151 aa).

The protein belongs to the SmpB family.

Its subcellular location is the cytoplasm. In terms of biological role, required for rescue of stalled ribosomes mediated by trans-translation. Binds to transfer-messenger RNA (tmRNA), required for stable association of tmRNA with ribosomes. tmRNA and SmpB together mimic tRNA shape, replacing the anticodon stem-loop with SmpB. tmRNA is encoded by the ssrA gene; the 2 termini fold to resemble tRNA(Ala) and it encodes a 'tag peptide', a short internal open reading frame. During trans-translation Ala-aminoacylated tmRNA acts like a tRNA, entering the A-site of stalled ribosomes, displacing the stalled mRNA. The ribosome then switches to translate the ORF on the tmRNA; the nascent peptide is terminated with the 'tag peptide' encoded by the tmRNA and targeted for degradation. The ribosome is freed to recommence translation, which seems to be the essential function of trans-translation. The polypeptide is SsrA-binding protein (Chlamydia pneumoniae (Chlamydophila pneumoniae)).